The primary structure comprises 159 residues: Large ribosomal subunit protein uL30 (159 aa).

The protein belongs to the universal ribosomal protein uL30 family. Part of the 50S ribosomal subunit.

This is Large ribosomal subunit protein uL30 from Ignicoccus hospitalis (strain KIN4/I / DSM 18386 / JCM 14125).